Reading from the N-terminus, the 383-residue chain is tRNA-specific 2-thiouridylase MnmA (383 aa).

ATP contacts are provided by residues 6–13 (AMSGGVDS) and Leu-32. The active-site Nucleophile is the Cys-101. A disulfide bond links Cys-101 and Cys-199. Residue Gly-125 participates in ATP binding. Residues 148-150 (KDQ) are interaction with tRNA. Residue Cys-199 is the Cysteine persulfide intermediate of the active site.

This sequence belongs to the MnmA/TRMU family.

Its subcellular location is the cytoplasm. It carries out the reaction S-sulfanyl-L-cysteinyl-[protein] + uridine(34) in tRNA + AH2 + ATP = 2-thiouridine(34) in tRNA + L-cysteinyl-[protein] + A + AMP + diphosphate + H(+). In terms of biological role, catalyzes the 2-thiolation of uridine at the wobble position (U34) of tRNA, leading to the formation of s(2)U34. This chain is tRNA-specific 2-thiouridylase MnmA, found in Kocuria rhizophila (strain ATCC 9341 / DSM 348 / NBRC 103217 / DC2201).